Consider the following 1418-residue polypeptide: Chromatin remodeling factor mit1 (1418 aa).

The segment covering 135–148 (DETASDSATSSSSD) has biased composition (low complexity). The disordered stretch occupies residues 135-156 (DETASDSATSSSSDTNKKVNRK). The PHD-type zinc-finger motif lies at 212–271 (VCVCVKCHGREHRSSGKNFVYCDHCSNVYHYDCSPLPSLNKETRNYSQQNGFICPLCSKN). The segment at 215 to 269 (CVKCHGREHRSSGKNFVYCDHCSNVYHYDCSPLPSLNKETRNYSQQNGFICPLCS) adopts an RING-type; atypical zinc-finger fold. The Helicase ATP-binding domain maps to 568 to 738 (YLRWYTHHPC…FNLLQFLNPM (171 aa)). 581 to 588 (DEMGLGKT) is a binding site for ATP. The Helicase C-terminal domain maps to 875–1034 (ILRLLVPKLI…QNHNSEKDLE (160 aa)).

Belongs to the SNF2/RAD54 helicase family. As to quaternary structure, interacts with clr3.

The protein resides in the nucleus. It localises to the chromosome. It is found in the centromere. The protein localises to the telomere. Its function is as follows. Required for proper positioning of nucleosomes at heterochromatic loci and for transcriptional gene silencing (TGS) function of the Snf2/Hdac-containing repressor complex (SHREC). The chain is Chromatin remodeling factor mit1 (mit1) from Schizosaccharomyces pombe (strain 972 / ATCC 24843) (Fission yeast).